The chain runs to 295 residues: GATA zinc finger domain-containing protein 23 (295 aa).

The segment covering 115-126 has biased composition (low complexity); sequence ASTSKTATSKNV. A disordered region spans residues 115–240; it reads ASTSKTATSK…KRGRPSKIQP (126 aa). Residues 127–145 show a composition bias toward polar residues; that stretch reads ISNIENNTNKSQPLESNDL. The segment covering 146 to 163 has biased composition (low complexity); it reads TPPSSKSSNSSPSTSPSK. Over residues 164–174 the composition is skewed to basic residues; that stretch reads RVSKSKTRVTK. Residues 181-227 show a composition bias toward low complexity; it reads STSSSGETENLTTTSTADTTATTDTADTTDGTNTRTSNTSSDDTTTE. Positions 229-241 form a DNA-binding region, a.T hook; sequence TKKRGRPSKIQPD. A GATA-type zinc finger spans residues 243 to 270; it reads CYVCRRTFTSYWRKGIFNDQNEDLCNPC.

The sequence is that of GATA zinc finger domain-containing protein 23 (gtaW) from Dictyostelium discoideum (Social amoeba).